Consider the following 256-residue polypeptide: Imidazole glycerol phosphate synthase subunit HisF (256 aa).

Residues D12 and D131 contribute to the active site.

This sequence belongs to the HisA/HisF family. As to quaternary structure, heterodimer of HisH and HisF.

Its subcellular location is the cytoplasm. The catalysed reaction is 5-[(5-phospho-1-deoxy-D-ribulos-1-ylimino)methylamino]-1-(5-phospho-beta-D-ribosyl)imidazole-4-carboxamide + L-glutamine = D-erythro-1-(imidazol-4-yl)glycerol 3-phosphate + 5-amino-1-(5-phospho-beta-D-ribosyl)imidazole-4-carboxamide + L-glutamate + H(+). Its pathway is amino-acid biosynthesis; L-histidine biosynthesis; L-histidine from 5-phospho-alpha-D-ribose 1-diphosphate: step 5/9. Its function is as follows. IGPS catalyzes the conversion of PRFAR and glutamine to IGP, AICAR and glutamate. The HisF subunit catalyzes the cyclization activity that produces IGP and AICAR from PRFAR using the ammonia provided by the HisH subunit. This Ectopseudomonas mendocina (strain ymp) (Pseudomonas mendocina) protein is Imidazole glycerol phosphate synthase subunit HisF.